Reading from the N-terminus, the 316-residue chain is Ornithine carbamoyltransferase (316 aa).

Residues 59 to 62 (STRT), Q86, R110, and 137 to 140 (HPCQ) each bind carbamoyl phosphate. L-ornithine is bound by residues N168, D232, and 236–237 (SM). Carbamoyl phosphate-binding positions include 273-274 (CL) and R301.

It belongs to the aspartate/ornithine carbamoyltransferase superfamily. OTCase family.

The protein localises to the cytoplasm. It carries out the reaction carbamoyl phosphate + L-ornithine = L-citrulline + phosphate + H(+). It functions in the pathway amino-acid degradation; L-arginine degradation via ADI pathway; carbamoyl phosphate from L-arginine: step 2/2. Reversibly catalyzes the transfer of the carbamoyl group from carbamoyl phosphate (CP) to the N(epsilon) atom of ornithine (ORN) to produce L-citrulline. The polypeptide is Ornithine carbamoyltransferase (Listeria monocytogenes serotype 4a (strain HCC23)).